The primary structure comprises 148 residues: Large ribosomal subunit protein bL9 (148 aa).

It belongs to the bacterial ribosomal protein bL9 family.

Functionally, binds to the 23S rRNA. The polypeptide is Large ribosomal subunit protein bL9 (Listeria monocytogenes serotype 4a (strain HCC23)).